A 199-amino-acid chain; its full sequence is FMN-dependent NADH:quinone oxidoreductase 2 (199 aa).

FMN is bound by residues Ser-10, 16–18 (SVS), and 96–99 (MYNF).

Belongs to the azoreductase type 1 family. Homodimer. The cofactor is FMN.

It catalyses the reaction 2 a quinone + NADH + H(+) = 2 a 1,4-benzosemiquinone + NAD(+). The enzyme catalyses N,N-dimethyl-1,4-phenylenediamine + anthranilate + 2 NAD(+) = 2-(4-dimethylaminophenyl)diazenylbenzoate + 2 NADH + 2 H(+). Its function is as follows. Quinone reductase that provides resistance to thiol-specific stress caused by electrophilic quinones. Functionally, also exhibits azoreductase activity. Catalyzes the reductive cleavage of the azo bond in aromatic azo compounds to the corresponding amines. This is FMN-dependent NADH:quinone oxidoreductase 2 from Pseudomonas putida (strain ATCC 47054 / DSM 6125 / CFBP 8728 / NCIMB 11950 / KT2440).